Here is a 570-residue protein sequence, read N- to C-terminus: Urease subunit alpha (570 aa).

Residues Gly131–Phe570 form the Urease domain. Ni(2+)-binding residues include His136, His138, and Lys219. An N6-carboxylysine modification is found at Lys219. His221 is a substrate binding site. 2 residues coordinate Ni(2+): His248 and His274. His322 functions as the Proton donor in the catalytic mechanism. Residue Asp362 participates in Ni(2+) binding.

Belongs to the metallo-dependent hydrolases superfamily. Urease alpha subunit family. In terms of assembly, heterotrimer of UreA (gamma), UreB (beta) and UreC (alpha) subunits. Three heterotrimers associate to form the active enzyme. It depends on Ni cation as a cofactor. Carboxylation allows a single lysine to coordinate two nickel ions.

The protein resides in the cytoplasm. The enzyme catalyses urea + 2 H2O + H(+) = hydrogencarbonate + 2 NH4(+). Its pathway is nitrogen metabolism; urea degradation; CO(2) and NH(3) from urea (urease route): step 1/1. The chain is Urease subunit alpha from Rhizobium johnstonii (strain DSM 114642 / LMG 32736 / 3841) (Rhizobium leguminosarum bv. viciae).